We begin with the raw amino-acid sequence, 112 residues long: uncharacterized protein (112 aa).

Ser-51 and Ser-53 each carry phosphoserine. The helical transmembrane segment at 90–110 (FIFTLSMFLIAFILLIAFVSF) threads the bilayer.

It localises to the golgi apparatus membrane. It is found in the endoplasmic reticulum membrane. This is an uncharacterized protein from Schizosaccharomyces pombe (strain 972 / ATCC 24843) (Fission yeast).